A 138-amino-acid polypeptide reads, in one-letter code: Thioredoxin H2-1 (138 aa).

Positions 1 to 20 (MGGAFSTSKPKPAAGEEGGE) are disordered. One can recognise a Thioredoxin domain in the interval 12-129 (PAAGEEGGES…LEKTINTLRS (118 aa)). Residues cysteine 55 and cysteine 58 each act as nucleophile in the active site. Cysteines 55 and 58 form a disulfide.

It belongs to the thioredoxin family. Plant H-type subfamily.

It is found in the cytoplasm. In terms of biological role, probable thiol-disulfide oxidoreductase that may be involved in the redox regulation of a number of cytosolic enzymes. This is Thioredoxin H2-1 from Oryza sativa subsp. japonica (Rice).